A 253-amino-acid chain; its full sequence is MCVVYRTSVLILLASGCSGVFDTPEDSKETQIKKSFAKTLDMYPIKNLEDLYDKEGYRDGEFKKGDKGTWVVRSEMIIQPKGKSLTSRGMILYMNRNTRTTTGYFSIEEIDSRKSLDERETEKKYPVKMINNKIIPTEEIKDEKLKKEIENFKFFVQYGSFKGIENYENGDISYNSEAPIYSAKYKLKNDDYNVKELRKRYNIPTEKAPKLLLKGSGDLKGSSVGYKEIEFIFIENKKENIYFSDGLNLIPSD.

The first 16 residues, 1–16 (MCVVYRTSVLILLASG), serve as a signal peptide directing secretion. Cys-17 carries the N-palmitoyl cysteine lipid modification. Cys-17 is lipidated: S-diacylglycerol cysteine.

It belongs to the staphylococcal tandem lipoprotein family.

It is found in the cell membrane. This is an uncharacterized protein from Staphylococcus aureus (strain N315).